The following is a 188-amino-acid chain: dCTP deaminase (188 aa).

Residues 111–116, 135–137, glutamine 156, tyrosine 170, and glutamine 180 each bind dCTP; these read KSTYAR and TLE. Glutamate 137 (proton donor/acceptor) is an active-site residue.

The protein belongs to the dCTP deaminase family. Homotrimer.

The catalysed reaction is dCTP + H2O + H(+) = dUTP + NH4(+). The protein operates within pyrimidine metabolism; dUMP biosynthesis; dUMP from dCTP (dUTP route): step 1/2. Its function is as follows. Catalyzes the deamination of dCTP to dUTP. This is dCTP deaminase from Coxiella burnetii (strain CbuK_Q154) (Coxiella burnetii (strain Q154)).